The chain runs to 485 residues: P2X purinoceptor 2 (485 aa).

The Cytoplasmic segment spans residues 1 to 43 (MAAAQPRLPAGAAMVRRLARGCWSAFWDYETPKVIVVRNRRLG). Cystine bridges form between Cys-22/Cys-443, Cys-126/Cys-177, Cys-137/Cys-160, Cys-143/Cys-171, Cys-227/Cys-237, and Cys-271/Cys-280. Residues 44-64 (FVHRMVQLLILLYFVWYVFIV) form a helical membrane-spanning segment. Residues 65–339 (QKSYQDSETG…IVHGQAGKFS (275 aa)) lie on the Extracellular side of the membrane. Residues Lys-82 and Lys-84 each coordinate ATP. N-linked (GlcNAc...) asparagine glycosylation occurs at Asn-195. Thr-197 contacts ATP. Asn-252 carries N-linked (GlcNAc...) asparagine glycosylation. Positions 297, 301, and 303 each coordinate ATP. Asn-311 carries an N-linked (GlcNAc...) asparagine glycan. Lys-321 contacts ATP. Residues 322–335 (AYGIRIDVIVHGQA) are pore-forming motif. The chain crosses the membrane as a helical span at residues 340 to 360 (LIPTIINLATALTSIGVGSFL). Residues 361-485 (CDWILLTFMN…STDPKGLAQL (125 aa)) lie on the Cytoplasmic side of the membrane. A disordered region spans residues 406-485 (PPPSHYSQDQ…STDPKGLAQL (80 aa)). Low complexity predominate over residues 420 to 436 (PSGEGPALGEGAELPLA). Polar residues predominate over residues 469-478 (PSQQDSTSTD).

It belongs to the P2X receptor family. Homotrimer and heterotrimer; functional P2XRs are organized as homomeric and heteromeric trimers. Homotrimer. Forms heterotrimer with P2XR1. Forms heterotrimer with P2XR3. Forms heterotrimer with P2XR6.

It is found in the cell membrane. The enzyme catalyses Ca(2+)(in) = Ca(2+)(out). It catalyses the reaction K(+)(in) = K(+)(out). It carries out the reaction Na(+)(in) = Na(+)(out). Its activity is regulated as follows. Fast activation by external ATP. Exhibits slow desensitization during prolonged ATP activation. Not sensitive to the ATP agonist:alpha/beta-methylene-ATP. Its function is as follows. ATP-gated nonselective transmembrane cation channel permeable to potassium, sodium and calcium. Activation by extracellular ATP induces a variety of cellular responses, such as excitatory postsynaptic responses in sensory neurons, neuromuscular junctions (NMJ) formation, hearing, perception of taste and peristalsis. In the inner ear, regulates sound transduction and auditory neurotransmission, outer hair cell electromotility, inner ear gap junctions, and K(+) recycling. Mediates synaptic transmission between neurons and from neurons to smooth muscle. This chain is P2X purinoceptor 2 (P2rx2), found in Mus musculus (Mouse).